The primary structure comprises 230 residues: Large ribosomal subunit protein uL1 (230 aa).

This sequence belongs to the universal ribosomal protein uL1 family. In terms of assembly, part of the 50S ribosomal subunit.

Binds directly to 23S rRNA. The L1 stalk is quite mobile in the ribosome, and is involved in E site tRNA release. Its function is as follows. Protein L1 is also a translational repressor protein, it controls the translation of the L11 operon by binding to its mRNA. The chain is Large ribosomal subunit protein uL1 from Lactobacillus acidophilus (strain ATCC 700396 / NCK56 / N2 / NCFM).